Reading from the N-terminus, the 474-residue chain is Nuclear receptor ROR-alpha B (474 aa).

Residues 14-89 (SIPCKICGDK…VGMSRDAVKF (76 aa)) constitute a DNA-binding region (nuclear receptor). 2 consecutive NR C4-type zinc fingers follow at residues 17–37 (CKICGDKSSGIHYGVITCEGC) and 53–72 (CPRQKSCLIDRTSRNRCQHC). Positions 98–124 (DSLFAEVQKHRQQQQDDKTGDESEKNQ) are enriched in basic and acidic residues. The tract at residues 98–144 (DSLFAEVQKHRQQQQDDKTGDESEKNQESQAPGEAEPLTPSYALSSS) is disordered. An NR LBD domain is found at 223–461 (DLEHLSENIC…TRFPPLYKEL (239 aa)). The segment at 450–461 (VHTRFPPLYKEL) is AF-2.

The protein belongs to the nuclear hormone receptor family.

The protein localises to the nucleus. Nuclear receptor that binds DNA as a monomer to ROR response elements (RORE). Required for proper cerebellum development. This chain is Nuclear receptor ROR-alpha B (rorab), found in Danio rerio (Zebrafish).